Reading from the N-terminus, the 478-residue chain is uncharacterized protein (478 aa).

The 81-residue stretch at 5-85 folds into the RRM domain; it reads KRIYVGGLSS…SKLRIEEARP (81 aa). A phosphoserine mark is found at serine 207 and serine 308.

Its subcellular location is the nucleus. It is found in the nucleolus. This is an uncharacterized protein from Schizosaccharomyces pombe (strain 972 / ATCC 24843) (Fission yeast).